Here is a 229-residue protein sequence, read N- to C-terminus: Synaptogyrin-3 (229 aa).

Methionine 1 is modified (N-acetylmethionine). Residues phenylalanine 20–arginine 172 form the MARVEL domain. 4 helical membrane-spanning segments follow: residues valine 30–asparagine 50, phenylalanine 70–valine 90, valine 105–phenylalanine 125, and alanine 148–leucine 168.

It belongs to the synaptogyrin family. As to quaternary structure, interacts (via N-terminus) with SLC6A3 (via N-terminus). May interact with VMAT2.

It is found in the cytoplasmic vesicle. The protein resides in the secretory vesicle. It localises to the synaptic vesicle membrane. The protein localises to the synapse. Its function is as follows. May play a role in regulated exocytosis. May indirectly regulate the activity of the plasma membrane dopamine transporter SLC6A3 and thereby regulate dopamine transport back from the synaptic cleft into the presynaptic terminal. In Bos taurus (Bovine), this protein is Synaptogyrin-3.